A 97-amino-acid polypeptide reads, in one-letter code: Large ribosomal subunit protein uL23 (97 aa).

It belongs to the universal ribosomal protein uL23 family. In terms of assembly, part of the 50S ribosomal subunit. Contacts protein L29, and trigger factor when it is bound to the ribosome.

One of the early assembly proteins it binds 23S rRNA. One of the proteins that surrounds the polypeptide exit tunnel on the outside of the ribosome. Forms the main docking site for trigger factor binding to the ribosome. The sequence is that of Large ribosomal subunit protein uL23 from Bartonella henselae (strain ATCC 49882 / DSM 28221 / CCUG 30454 / Houston 1) (Rochalimaea henselae).